The sequence spans 485 residues: Ribulose bisphosphate carboxylase large chain (485 aa).

The propeptide occupies 1–2; the sequence is MS. Proline 3 is subject to N-acetylproline. The residue at position 14 (lysine 14) is an N6,N6,N6-trimethyllysine. Substrate-binding residues include asparagine 123 and threonine 173. The active-site Proton acceptor is the lysine 175. Lysine 177 is a binding site for substrate. Mg(2+) is bound by residues lysine 201, aspartate 203, and glutamate 204. Lysine 201 is subject to N6-carboxylysine. Histidine 294 acts as the Proton acceptor in catalysis. Substrate contacts are provided by arginine 295, histidine 327, and serine 379.

The protein belongs to the RuBisCO large chain family. Type I subfamily. In terms of assembly, heterohexadecamer of 8 large chains and 8 small chains; disulfide-linked. The disulfide link is formed within the large subunit homodimers. Mg(2+) is required as a cofactor. In terms of processing, the disulfide bond which can form in the large chain dimeric partners within the hexadecamer appears to be associated with oxidative stress and protein turnover.

It is found in the plastid. The protein localises to the chloroplast. The enzyme catalyses 2 (2R)-3-phosphoglycerate + 2 H(+) = D-ribulose 1,5-bisphosphate + CO2 + H2O. It catalyses the reaction D-ribulose 1,5-bisphosphate + O2 = 2-phosphoglycolate + (2R)-3-phosphoglycerate + 2 H(+). Its function is as follows. RuBisCO catalyzes two reactions: the carboxylation of D-ribulose 1,5-bisphosphate, the primary event in carbon dioxide fixation, as well as the oxidative fragmentation of the pentose substrate in the photorespiration process. Both reactions occur simultaneously and in competition at the same active site. In Bartlettina sordida (Purple torch), this protein is Ribulose bisphosphate carboxylase large chain.